A 231-amino-acid polypeptide reads, in one-letter code: Ribose-5-phosphate isomerase A (231 aa).

Substrate contacts are provided by residues 28 to 31 (TGST), 83 to 86 (DGAD), and 96 to 99 (KGGG). Residue glutamate 105 is the Proton acceptor of the active site. Lysine 123 is a substrate binding site.

Belongs to the ribose 5-phosphate isomerase family. As to quaternary structure, homodimer.

The enzyme catalyses aldehydo-D-ribose 5-phosphate = D-ribulose 5-phosphate. Its pathway is carbohydrate degradation; pentose phosphate pathway; D-ribose 5-phosphate from D-ribulose 5-phosphate (non-oxidative stage): step 1/1. Catalyzes the reversible conversion of ribose-5-phosphate to ribulose 5-phosphate. The protein is Ribose-5-phosphate isomerase A of Rhizobium meliloti (strain 1021) (Ensifer meliloti).